Consider the following 830-residue polypeptide: uncharacterized protein (830 aa).

Disordered stretches follow at residues 1–28, 70–147, and 186–210; these read MGVQLKLDPNSKNWLRQPDQQPIQDSIC, RRAN…GNFA, and AASPTVSFSPASTSENLTPTSSKSL. Residues 10–27 show a composition bias toward polar residues; sequence NSKNWLRQPDQQPIQDSI. Low complexity-rich tracts occupy residues 100–130 and 186–199; these read QKSSNSRKSIRSQSRSRSSSVGSDSQASIQS and AASPTVSFSPASTS. Positions 200–210 are enriched in polar residues; the sequence is ENLTPTSSKSL. A run of 10 helical transmembrane segments spans residues 505–525, 529–549, 551–571, 584–604, 622–642, 659–679, 691–711, 715–735, 740–760, and 802–822; these read WLVAFMHGVASASILPVVYGG, DMLIGFVLGLLLGIFRVYINP, FFLFDSLFEVIISIILSFLGR, FCFAALVEGAITLILPGYVVF, MLYAVIFSLFLSFGITIGSAL, IIAVSPYWYILLIPIFTLSLL, IQMFVACCGYVVYYFSSLHFG, ISSAIGSFAVGCLGNMYSHFI, FAVVLPAIFVLVPSGFAAQGG, and IAIGIAIGFLASSLTVYPFFG.

This sequence belongs to the ThrE exporter (TC 2.A.79) family.

It is found in the cell membrane. The protein localises to the cell tip. This is an uncharacterized protein from Schizosaccharomyces pombe (strain 972 / ATCC 24843) (Fission yeast).